The primary structure comprises 525 residues: MASPIASAALRARVKRPSMLKKLCNPEDMLQHFPNGAYIGWSGFTGVGYPKKVPTMLADHVEKNGLQGQLKYSLFVGASAGAETENRWAALDMIARRAPHQVGKNIAKGINEGRINFFDKHLSMFPVDLVYGYYTKDRQNKNLDVVCVEATEIKEDGSIVLGASVGATPELIQMADKVIIEVNTAIPSFDGLHDITFSDLPPNRKPYLIQQCRDRIGTTSVPVDPEKVVGIIECTTPDQTLPNSPADETATAIAGHLIEFFEHEVAHGRLPKNLLPLQSGIGNIANAVIGGLETSNFKNLNVWTEVIQDTFLDLFDSGKLDFATATSIRFSPTGFERFYKNWDNYYDKLLLRSQSVSNAPEIIRRLGVIGMNTPVEVDIYAHANSTNVMGSRMLNGLGGSADFLRNSKYSIMHTPSTRPSKTDAHGVSCIVPMCTHVDQTEHDLDVIVTENGLADVRGLSPRERARVIIDKCAHDVYKPILKAYFEKAEFECLRKGMGHEPHLLFNSFDMHKALVEEGSMAKVKF.

CoA is bound at residue 280–284 (GIGNI). Glu-305 functions as the 5-glutamyl coenzyme A thioester intermediate in the catalytic mechanism. Residues Asn-395 and Gly-399 each contribute to the CoA site.

It belongs to the acetyl-CoA hydrolase/transferase family.

It is found in the cytoplasm. The enzyme catalyses acetyl-CoA + H2O = acetate + CoA + H(+). Its function is as follows. Required for utilization of acetate. The chain is Acetyl-CoA hydrolase (acu-8) from Neurospora crassa (strain ATCC 24698 / 74-OR23-1A / CBS 708.71 / DSM 1257 / FGSC 987).